Consider the following 213-residue polypeptide: 3-hexulose-6-phosphate synthase 2 (213 aa).

Belongs to the HPS/KGPDC family. HPS subfamily.

It carries out the reaction D-ribulose 5-phosphate + formaldehyde = D-arabino-hex-3-ulose 6-phosphate. It functions in the pathway one-carbon metabolism; formaldehyde assimilation via RuMP pathway; D-fructose 6-phosphate from D-ribulose 5-phosphate and formaldehyde: step 1/2. Catalyzes the condensation of ribulose 5-phosphate with formaldehyde to form 3-hexulose 6-phosphate. This chain is 3-hexulose-6-phosphate synthase 2, found in Staphylococcus saprophyticus subsp. saprophyticus (strain ATCC 15305 / DSM 20229 / NCIMB 8711 / NCTC 7292 / S-41).